Consider the following 226-residue polypeptide: UPF0758 protein PsycPRwf_0491 (226 aa).

An MPN domain is found at Ser102–Ala224. Zn(2+) contacts are provided by His173, His175, and Asp186. Residues His173–Asp186 carry the JAMM motif motif.

This sequence belongs to the UPF0758 family.

This is UPF0758 protein PsycPRwf_0491 from Psychrobacter sp. (strain PRwf-1).